Reading from the N-terminus, the 138-residue chain is Large ribosomal subunit protein uL16 (138 aa).

The span at 1 to 16 (MLIPKRVKFRRQHRPN) shows a compositional bias: basic residues. The interval 1–25 (MLIPKRVKFRRQHRPNRSGMSKGGN) is disordered.

It belongs to the universal ribosomal protein uL16 family. In terms of assembly, part of the 50S ribosomal subunit.

Its function is as follows. Binds 23S rRNA and is also seen to make contacts with the A and possibly P site tRNAs. In Corynebacterium urealyticum (strain ATCC 43042 / DSM 7109), this protein is Large ribosomal subunit protein uL16.